Consider the following 495-residue polypeptide: Cysteine--tRNA ligase (495 aa).

C29 provides a ligand contact to Zn(2+). Residues 31 to 41 carry the 'HIGH' region motif; that stretch reads VTVYDDSHVGH. Positions 209, 234, and 238 each coordinate Zn(2+). Positions 266-270 match the 'KMSKS' region motif; it reads KMSKS. K269 is a binding site for ATP.

It belongs to the class-I aminoacyl-tRNA synthetase family. Monomer. The cofactor is Zn(2+).

It is found in the cytoplasm. It catalyses the reaction tRNA(Cys) + L-cysteine + ATP = L-cysteinyl-tRNA(Cys) + AMP + diphosphate. This is Cysteine--tRNA ligase (cysS) from Aquifex aeolicus (strain VF5).